Here is a 107-residue protein sequence, read N- to C-terminus: Putative double-stranded DNA mimic protein Spro_2690 (107 aa).

It belongs to the putative dsDNA mimic protein family.

Its function is as follows. May act as a double-stranded DNA (dsDNA) mimic. Probably regulates the activity of a dsDNA-binding protein. The polypeptide is Putative double-stranded DNA mimic protein Spro_2690 (Serratia proteamaculans (strain 568)).